Here is a 333-residue protein sequence, read N- to C-terminus: Fructose-1,6-bisphosphatase class 1 (333 aa).

Mg(2+) contacts are provided by Glu-92, Asp-113, Leu-115, and Asp-116. Residues 116–119 (DGSS), Asn-209, Tyr-242, and Lys-272 each bind substrate. A Mg(2+)-binding site is contributed by Glu-278.

The protein belongs to the FBPase class 1 family. Homotetramer. It depends on Mg(2+) as a cofactor.

The protein localises to the cytoplasm. The catalysed reaction is beta-D-fructose 1,6-bisphosphate + H2O = beta-D-fructose 6-phosphate + phosphate. It functions in the pathway carbohydrate biosynthesis; Calvin cycle. In Chlorobium luteolum (strain DSM 273 / BCRC 81028 / 2530) (Pelodictyon luteolum), this protein is Fructose-1,6-bisphosphatase class 1.